Consider the following 232-residue polypeptide: Ribose-5-phosphate isomerase A (232 aa).

Substrate is bound by residues 29–32, 84–87, and 97–100; these read TGST, DGAD, and KGGG. Residue glutamate 106 is the Proton acceptor of the active site. Lysine 124 is a binding site for substrate.

It belongs to the ribose 5-phosphate isomerase family. As to quaternary structure, homodimer.

It carries out the reaction aldehydo-D-ribose 5-phosphate = D-ribulose 5-phosphate. Its pathway is carbohydrate degradation; pentose phosphate pathway; D-ribose 5-phosphate from D-ribulose 5-phosphate (non-oxidative stage): step 1/1. Functionally, catalyzes the reversible conversion of ribose-5-phosphate to ribulose 5-phosphate. The protein is Ribose-5-phosphate isomerase A of Brucella suis biovar 1 (strain 1330).